We begin with the raw amino-acid sequence, 183 residues long: DELTA-miturgitoxin-Cp1c (183 aa).

The signal sequence occupies residues 1-20 (MKFSLFFSVFFLAVLHACLS). The propeptide occupies 21 to 47 (ESEIDLEDEEHFMSSDSFLSEIQDESR). The short motif at 44 to 47 (DESR) is the Processing quadruplet motif element. Cystine bridges form between Cys-51-Cys-66, Cys-58-Cys-75, Cys-65-Cys-88, Cys-77-Cys-86, Cys-115-Cys-130, Cys-122-Cys-139, Cys-129-Cys-157, and Cys-141-Cys-155. Positions 164-177 (QAIEGALRIAKKLI) are predicted alpha-helix. Trp-181 carries the tryptophan amide modification.

This sequence belongs to the neurotoxin 19 (CSTX) family. Double-CSTX subfamily. In terms of processing, cleavage of the propeptide depends on the processing quadruplet motif (XXXR, with at least one of X being E). As to expression, expressed by the venom gland.

Its subcellular location is the secreted. It localises to the target cell membrane. In terms of biological role, spider venom toxin that exhibits cytolytic activity by forming an alpha-helix across the membrane. Lethal to insect larvae. Causes instant paralysis and death in the larvae of the flesh fly (S.carnaria) at doses of 20 ug/g, at doses of less than 10 ug/g causes reversible paralysis. Has cytolytic activity against insect Sf9 cells. Causes stable and irreversible depolarization of fly muscle fibers, leading to contracture at higher toxin concentrations. Destabilizes membranes. The protein is DELTA-miturgitoxin-Cp1c of Cheiracanthium punctorium (Yellow sac spider).